Reading from the N-terminus, the 443-residue chain is 3-ketoacyl-CoA thiolase 1, peroxisomal (443 aa).

A peroxisome-targeting transit peptide spans 1–30 (MEKATERQRILLRHLQPSSSSDASLSASAC). The active-site Acyl-thioester intermediate is the Cys-130. Active-site proton acceptor residues include His-385 and Cys-417.

This sequence belongs to the thiolase-like superfamily. Thiolase family. In terms of assembly, homodimer. In terms of tissue distribution, low levels in seedlings and leaves.

It localises to the peroxisome. It carries out the reaction an acyl-CoA + acetyl-CoA = a 3-oxoacyl-CoA + CoA. It functions in the pathway lipid metabolism; fatty acid metabolism. In terms of biological role, involved in fatty-acid beta-oxidation prior to gluconeogenesis during germination and subsequent seedling growth. Implicated in jasmonic acid (JA) biosynthesis. This chain is 3-ketoacyl-CoA thiolase 1, peroxisomal (KAT1), found in Arabidopsis thaliana (Mouse-ear cress).